We begin with the raw amino-acid sequence, 115 residues long: Aspartate 1-decarboxylase (115 aa).

Serine 25 (schiff-base intermediate with substrate; via pyruvic acid) is an active-site residue. At serine 25 the chain carries Pyruvic acid (Ser). Threonine 57 provides a ligand contact to substrate. Tyrosine 58 acts as the Proton donor in catalysis. Position 73–75 (73–75 (GAA)) interacts with substrate.

Belongs to the PanD family. In terms of assembly, heterooctamer of four alpha and four beta subunits. Pyruvate is required as a cofactor. In terms of processing, is synthesized initially as an inactive proenzyme, which is activated by self-cleavage at a specific serine bond to produce a beta-subunit with a hydroxyl group at its C-terminus and an alpha-subunit with a pyruvoyl group at its N-terminus.

Its subcellular location is the cytoplasm. The enzyme catalyses L-aspartate + H(+) = beta-alanine + CO2. Its pathway is cofactor biosynthesis; (R)-pantothenate biosynthesis; beta-alanine from L-aspartate: step 1/1. Functionally, catalyzes the pyruvoyl-dependent decarboxylation of aspartate to produce beta-alanine. The polypeptide is Aspartate 1-decarboxylase (Kosmotoga olearia (strain ATCC BAA-1733 / DSM 21960 / TBF 19.5.1)).